Reading from the N-terminus, the 60-residue chain is Protein YmjC (60 aa).

The tract at residues 40–60 (HKPYPTNKMQTTSGKKVIQDR) is disordered.

In Escherichia coli (strain K12), this protein is Protein YmjC (ymjC).